The primary structure comprises 884 residues: Probable disease resistance protein At1g12290 (884 aa).

The stretch at 26–66 (LYYIQNIKENLTSLEEAMEDLKALRDDLLRKVQTAEEGGLQ) forms a coiled coil. Residues 139 to 443 (AHPATRAVGE…CEGFIDGDEN (305 aa)) enclose the NB-ARC domain. 182-189 (GMGGVGKT) contacts ATP. 6 LRR repeats span residues 519–540 (VVSRMSLVNNRIKEIHGSPECP), 541–563 (KLTTLFLQDNRHLVNISGEFFRS), 566–588 (RLVVLDLSWNVNLSGLPDQISEL), 590–612 (SLRYLDLSYSSIGRLPVGLLKLK), 613–635 (KLMHLNLESMLCLESVSGIDHLS), and 644–664 (NLRMWLTISLLEELERLENLE).

Belongs to the disease resistance NB-LRR family.

Its function is as follows. Probable disease resistance protein. The sequence is that of Probable disease resistance protein At1g12290 from Arabidopsis thaliana (Mouse-ear cress).